A 597-amino-acid chain; its full sequence is MSSSEVLAPEAYIDDSISFESLQLDTRLLQAIKRNGFKNPTLIQSHAIPLALQEKRDIIAKAATGCGKTLAYLIPVIQTILDYKKTNTDKIDGTSNTLGIILVPTRELAQQVNDVLDKMILYCSNDIRSLNISSDMPSSVLTSLLLEKPEIIIATPGKLMTLLDTNVESVSLEELKFLVIDEVDLVLTFGYKEDLSKIAEYLPLKKNLQTFLMSATLNDDIQELKKEFCRAPAILKFNDDEISKDKNKLIQYYVKTSEFDKFLLCYVIFKLGLIKGKTLIFVNNIDRGYRLKLVLEQFGIKSCILNSELPANSRQHIVDQFNKNVYHLLIATDDTEYIKEEDEENDDEIETNSEEQDKVEDSNDTKDKKGKKASKIKKDKEFGVSRGVDFQNVACVLNFDLPTTAKSYVHRIGRTARAGKTGTAISFVVPLKEFGKHKPSMYQSTKRDEKILSRIIKQQSKLGLELQPYSFDTKQIEGFRYRMEDGFRAVTQVAIREARVKELKDELLASEKLKRHFEENPQELQSLRHDKELHPSRVQQHLKRVPDYLLPAEAREGKKKVGFVPFHSVKKSNRHKKNNKVFKKRSGSKSDPLKNFK.

Residues 17–45 carry the Q motif motif; that stretch reads ISFESLQLDTRLLQAIKRNGFKNPTLIQS. The Helicase ATP-binding domain maps to 49-235; it reads PLALQEKRDI…KEFCRAPAIL (187 aa). Residue 62–69 coordinates ATP; the sequence is AATGCGKT. The short motif at 181–184 is the DEAD box element; the sequence is DEVD. The region spanning 248 to 477 is the Helicase C-terminal domain; sequence KLIQYYVKTS…PYSFDTKQIE (230 aa). Over residues 340–354 the composition is skewed to acidic residues; sequence EEDEENDDEIETNSE. 3 disordered regions span residues 340 to 373, 521 to 540, and 561 to 597; these read EEDE…GKKA, PQEL…RVQQ, and VGFV…KNFK. 2 stretches are compositionally biased toward basic and acidic residues: residues 355–367 and 526–535; these read EQDK…DTKD and SLRHDKELHP. The segment covering 568–587 has biased composition (basic residues); that stretch reads SVKKSNRHKKNNKVFKKRSG.

The protein belongs to the DEAD box helicase family. DDX56/DBP9 subfamily.

Its subcellular location is the nucleus. The protein resides in the nucleolus. The enzyme catalyses ATP + H2O = ADP + phosphate + H(+). In terms of biological role, ATP-binding RNA helicase involved in the biogenesis of 60S ribosomal subunits and is required for the normal formation of 25S and 5.8S rRNAs. The polypeptide is ATP-dependent RNA helicase DBP9 (DBP9) (Vanderwaltozyma polyspora (strain ATCC 22028 / DSM 70294 / BCRC 21397 / CBS 2163 / NBRC 10782 / NRRL Y-8283 / UCD 57-17) (Kluyveromyces polysporus)).